The primary structure comprises 313 residues: Serine/threonine-protein phosphatase PP2A-4 catalytic subunit (313 aa).

4 residues coordinate Mn(2+): aspartate 61, histidine 63, aspartate 89, and asparagine 121. Residue histidine 122 is the Proton donor of the active site. Residues histidine 171 and histidine 245 each contribute to the Mn(2+) site. At leucine 313 the chain carries Leucine methyl ester.

It belongs to the PPP phosphatase family. PP-2A subfamily. As to quaternary structure, PP2A consists of a common heterodimeric core enzyme, composed of a 36 kDa catalytic subunit (subunit C) and a 65 kDa constant regulatory subunit (subunit A), that associates with a variety of regulatory subunits such as subunits B (the R2/B/PR55/B55, R3/B''/PR72/PR130/PR59 and R5/B'/B56 families). Interacts with SIC/RON3. Mn(2+) is required as a cofactor. Post-translationally, reversibly methyl esterified on Leu-313 by leucine carboxyl methyltransferase 1 (LCMT1) and pectin methylesterase 1 (PME1). Carboxyl methylation influences the affinity of the catalytic subunit for the different regulatory subunits, thereby modulating the PP2A holoenzyme's substrate specificity, enzyme activity and cellular localization. Phosphorylation of either threonine (by autophosphorylation-activated protein kinase) or tyrosine results in inactivation of the phosphatase. Auto-dephosphorylation has been suggested as a mechanism for reactivation.

The protein localises to the cytoplasm. It catalyses the reaction O-phospho-L-seryl-[protein] + H2O = L-seryl-[protein] + phosphate. The enzyme catalyses O-phospho-L-threonyl-[protein] + H2O = L-threonyl-[protein] + phosphate. In terms of biological role, functions redundantly with PP2A3, and is involved in establishing auxin gradients, apical-basal axis of polarity and root and shoot apical meristem during embryogenesis. May dephosphorylate PIN1 and regulate its subcellular distribution for polar auxin transport. The holoenzyme composed of PP2AA1, PP2A4 and B'ZETA or B'ETA acts as a negative regulator of plant innate immunity by controlling BAK1 phosphorylation state and activation in surface-localized immune receptor complexes. The protein is Serine/threonine-protein phosphatase PP2A-4 catalytic subunit of Arabidopsis thaliana (Mouse-ear cress).